A 138-amino-acid chain; its full sequence is Large ribosomal subunit protein uL16c (138 aa).

The protein belongs to the universal ribosomal protein uL16 family. In terms of assembly, part of the 50S ribosomal subunit.

Its subcellular location is the plastid. It is found in the chloroplast. The chain is Large ribosomal subunit protein uL16c from Physcomitrium patens (Spreading-leaved earth moss).